The sequence spans 392 residues: tRNA (guanine(6)-N2)-methyltransferase (392 aa).

The THUMP domain maps to 73–183 (SAIPLLNHFS…DSELFVGVDT (111 aa)). S-adenosyl-L-methionine-binding positions include 199–203 (HPAHL), 230–232 (SGT), glutamate 275, 303–304 (DA), and asparagine 317.

Belongs to the methyltransferase superfamily.

It localises to the cytoplasm. The catalysed reaction is guanosine(6) in tRNA + S-adenosyl-L-methionine = N(2)-methylguanosine(6) in tRNA + S-adenosyl-L-homocysteine + H(+). In terms of biological role, S-adenosyl-L-methionine-dependent methyltransferase that catalyzes the methylation of the guanosine nucleotide at position 6 (m2G6) in tRNA. The polypeptide is tRNA (guanine(6)-N2)-methyltransferase (Archaeoglobus fulgidus (strain ATCC 49558 / DSM 4304 / JCM 9628 / NBRC 100126 / VC-16)).